Here is a 266-residue protein sequence, read N- to C-terminus: Interleukin-1 beta (266 aa).

Positions methionine 1 to aspartate 113 are excised as a propeptide.

Belongs to the IL-1 family. In terms of assembly, monomer. In its precursor form, weakly interacts with full-length MEFV; the mature cytokine does not interact at all. Interacts with integrins ITGAV:ITGBV and ITGA5:ITGB1; integrin-binding is required for IL1B signaling. Interacts with cargo receptor TMED10; the interaction is direct and is required for the secretion of IL1B mature form. Interacts with HSP90AB1; the interaction facilitates cargo translocation into the ERGIC. Interacts with HSP90B1; the interaction facilitates cargo translocation into the ERGIC.

The protein resides in the cytoplasm. It localises to the cytosol. It is found in the secreted. Its subcellular location is the lysosome. The protein localises to the extracellular exosome. In terms of biological role, potent pro-inflammatory cytokine. Initially discovered as the major endogenous pyrogen, induces prostaglandin synthesis, neutrophil influx and activation, T-cell activation and cytokine production, B-cell activation and antibody production, and fibroblast proliferation and collagen production. Promotes Th17 differentiation of T-cells. Synergizes with IL12/interleukin-12 to induce IFNG synthesis from T-helper 1 (Th1) cells. Plays a role in angiogenesis by inducing VEGF production synergistically with TNF and IL6. Involved in transduction of inflammation downstream of pyroptosis: its mature form is specifically released in the extracellular milieu by passing through the gasdermin-D (GSDMD) pore. The protein is Interleukin-1 beta (IL1B) of Bubalus carabanensis (Swamp type water buffalo).